The sequence spans 325 residues: MIDFANFYQLIAKNRLSHWLHTLPAQLHAWQHDNQHGDLPRWNRALNKLPQVAPGHIELHSRVEIGSAESLGEGERKKVESLLRHFMPWRKGPFTVHGIHIDTEWRSDWKWDRVLPHISPLAGRYVLDVGCGSGYHLWRMVGEGAKLAVGIDPSPLFLCQFEAIRHFAGNDQRAHLLPLGIQELPELRAFDTVFSMGVLYHRKSPIEHIEQLRNQLKDDGELVLETLVIDGGVNDVLVPTDRYGKMRNVWFIPSSAALKLWVERCGFTDVRIVDENMTSTDEQRRTDWMINESLSDYLDPTNPALTVEGHPAPKRAVLIARKAKD.

Carboxy-S-adenosyl-L-methionine is bound by residues K91, W105, K110, G130, 152–154 (DPS), M196, Y200, and R315.

This sequence belongs to the class I-like SAM-binding methyltransferase superfamily. CmoB family. As to quaternary structure, homotetramer.

It catalyses the reaction carboxy-S-adenosyl-L-methionine + 5-hydroxyuridine(34) in tRNA = 5-carboxymethoxyuridine(34) in tRNA + S-adenosyl-L-homocysteine + H(+). Its function is as follows. Catalyzes carboxymethyl transfer from carboxy-S-adenosyl-L-methionine (Cx-SAM) to 5-hydroxyuridine (ho5U) to form 5-carboxymethoxyuridine (cmo5U) at position 34 in tRNAs. This Aeromonas hydrophila subsp. hydrophila (strain ATCC 7966 / DSM 30187 / BCRC 13018 / CCUG 14551 / JCM 1027 / KCTC 2358 / NCIMB 9240 / NCTC 8049) protein is tRNA U34 carboxymethyltransferase.